The chain runs to 288 residues: Glycine--tRNA ligase alpha subunit (288 aa).

This sequence belongs to the class-II aminoacyl-tRNA synthetase family. Tetramer of two alpha and two beta subunits.

It is found in the cytoplasm. The catalysed reaction is tRNA(Gly) + glycine + ATP = glycyl-tRNA(Gly) + AMP + diphosphate. This chain is Glycine--tRNA ligase alpha subunit, found in Rickettsia peacockii (strain Rustic).